The chain runs to 935 residues: C-1-tetrahydrofolate synthase, cytoplasmic (935 aa).

Methionine 1 carries the N-acetylmethionine modification. Residues 2–291 (APAGILNGKV…MLMQSTVESA (290 aa)) are methylenetetrahydrofolate dehydrogenase and methenyltetrahydrofolate cyclohydrolase (D/C) domain. Residues 52–56 (YINVK) and 99–101 (VQL) each bind substrate. The active site involves lysine 56. NADP(+) is bound by residues 172–174 (GRS) and serine 197. 272–276 (PGGVG) is a substrate binding site. The tract at residues 310-935 (LNLKTPVPSD…PETEQVNGLF (626 aa)) is formyltetrahydrofolate synthetase domain. A Phosphoserine modification is found at serine 318. 380–387 (TPLGEGKS) serves as a coordination point for ATP. 2 positions are modified to phosphoserine: serine 413 and serine 490.

This sequence in the N-terminal section; belongs to the tetrahydrofolate dehydrogenase/cyclohydrolase family. The protein in the C-terminal section; belongs to the formate--tetrahydrofolate ligase family. Homodimer.

It is found in the cytoplasm. It catalyses the reaction (6R)-5,10-methylene-5,6,7,8-tetrahydrofolate + NADP(+) = (6R)-5,10-methenyltetrahydrofolate + NADPH. The catalysed reaction is (6R)-5,10-methenyltetrahydrofolate + H2O = (6R)-10-formyltetrahydrofolate + H(+). The enzyme catalyses (6S)-5,6,7,8-tetrahydrofolate + formate + ATP = (6R)-10-formyltetrahydrofolate + ADP + phosphate. It functions in the pathway one-carbon metabolism; tetrahydrofolate interconversion. Functionally, trifunctional enzyme that catalyzes the interconversion of three forms of one-carbon-substituted tetrahydrofolate: (6R)-5,10-methylene-5,6,7,8-tetrahydrofolate, 5,10-methenyltetrahydrofolate and (6S)-10-formyltetrahydrofolate. These derivatives of tetrahydrofolate are differentially required in nucleotide and amino acid biosynthesis, (6S)-10-formyltetrahydrofolate being required for purine biosynthesis while (6R)-5,10-methylene-5,6,7,8-tetrahydrofolate is used for serine and methionine biosynthesis for instance. This is C-1-tetrahydrofolate synthase, cytoplasmic (Mthfd1) from Rattus norvegicus (Rat).